The sequence spans 270 residues: Undecaprenyl-diphosphatase (270 aa).

The next 8 membrane-spanning stretches (helical) occupy residues 14 to 34 (GLTE…PTFL), 40 to 60 (GITF…LYFW), 88 to 108 (FYII…ETTI), 117 to 137 (SLIA…DTSG), 146 to 166 (ITLK…IPGV), 189 to 209 (FSFL…LSGL), 221 to 241 (PLLI…AFLL), and 249 to 269 (LYPF…FINF).

This sequence belongs to the UppP family.

It is found in the cell inner membrane. The catalysed reaction is di-trans,octa-cis-undecaprenyl diphosphate + H2O = di-trans,octa-cis-undecaprenyl phosphate + phosphate + H(+). Functionally, catalyzes the dephosphorylation of undecaprenyl diphosphate (UPP). Confers resistance to bacitracin. The protein is Undecaprenyl-diphosphatase of Geotalea daltonii (strain DSM 22248 / JCM 15807 / FRC-32) (Geobacter daltonii).